The sequence spans 273 residues: Undecaprenyl-diphosphatase (273 aa).

A run of 8 helical transmembrane segments spans residues isoleucine 3–proline 23, glycine 48–phenylalanine 68, leucine 89–glutamate 109, leucine 116–alanine 136, isoleucine 151–phenylalanine 171, alanine 192–leucine 212, phenylalanine 225–leucine 245, and leucine 253–alanine 273.

The protein belongs to the UppP family.

The protein localises to the cell membrane. It catalyses the reaction di-trans,octa-cis-undecaprenyl diphosphate + H2O = di-trans,octa-cis-undecaprenyl phosphate + phosphate + H(+). Catalyzes the dephosphorylation of undecaprenyl diphosphate (UPP). Confers resistance to bacitracin. The protein is Undecaprenyl-diphosphatase of Anoxybacillus flavithermus (strain DSM 21510 / WK1).